The primary structure comprises 347 residues: 4-hydroxy-2-oxovalerate aldolase 2 (347 aa).

The Pyruvate carboxyltransferase domain maps to 9–259 (ITIVDTTLRD…DTGVDLFPLI (251 aa)). Residues 17–18 (RD), S171, and H198 contribute to the substrate site. A Mn(2+)-binding site is contributed by D18. 2 residues coordinate Mn(2+): H198 and H200. Y289 lines the substrate pocket.

Belongs to the 4-hydroxy-2-oxovalerate aldolase family.

It carries out the reaction (S)-4-hydroxy-2-oxopentanoate = acetaldehyde + pyruvate. The protein is 4-hydroxy-2-oxovalerate aldolase 2 of Rhodococcus opacus (strain B4).